We begin with the raw amino-acid sequence, 263 residues long: Flagellar brake protein YcgR (263 aa).

The interval 1-21 (MAELSTPSPASPAPLDGGRGD) is disordered. Residues 133–250 (QRREFYRLQV…DTRIQRYIFK (118 aa)) enclose the PilZ domain.

This sequence belongs to the YcgR family. Monomer. Interacts with the flagellar basal bodies.

The protein resides in the bacterial flagellum basal body. Functionally, acts as a flagellar brake, regulating swimming and swarming in a bis-(3'-5') cyclic diguanylic acid (c-di-GMP)-dependent manner. Binds 1 c-di-GMP dimer per subunit. Increasing levels of c-di-GMP lead to decreased motility. The polypeptide is Flagellar brake protein YcgR (Thauera aminoaromatica).